A 345-amino-acid polypeptide reads, in one-letter code: MALISLRQLLDHAGEFGYGVPAFNVNNLEQIHAIMEAAEETDSPVILQASAGARKYAGEAYLRHMVLAAAETHPDIPIVLHQDHGSSPAVCQASIRSGFTSVMMDGSLREDMKTPSDYDYNVDVTRRVCEMAHAVGVSVEGELGCLGSLETGQAGEEDGVGAAGTLSHDMMLTDPAQARDFVARTGVDALAIAIGTSHGAYKFSRKPTGDILAIDRIREIHEQIPDTHLVMHGSSSVPQEWLEIIRQYGGDIKETYGVPVEEILRGIKTGVRKVNIDTDIRLAMTGAIRKSLAEDRSEFDPRKALLAAKKGARSVVKLRFEAFGCAGQASKIKPIAMEQLAQWYR.

Ser-50 is a D-glyceraldehyde 3-phosphate binding site. The Proton donor role is filled by Asp-83. Residues His-84, Asp-105, Glu-142, and His-198 each coordinate Zn(2+). Gly-199 contacts dihydroxyacetone phosphate. His-232 contributes to the Zn(2+) binding site. Dihydroxyacetone phosphate is bound by residues 233-235 (GSS) and 275-278 (NIDT).

It belongs to the class II fructose-bisphosphate aldolase family. In terms of assembly, homodimer. Zn(2+) is required as a cofactor.

It catalyses the reaction beta-D-fructose 1,6-bisphosphate = D-glyceraldehyde 3-phosphate + dihydroxyacetone phosphate. The protein operates within carbohydrate biosynthesis; Calvin cycle. It participates in carbohydrate degradation; glycolysis; D-glyceraldehyde 3-phosphate and glycerone phosphate from D-glucose: step 4/4. Its function is as follows. Catalyzes the aldol condensation of dihydroxyacetone phosphate (DHAP or glycerone-phosphate) with glyceraldehyde 3-phosphate (G3P) to form fructose 1,6-bisphosphate (FBP) in gluconeogenesis and the reverse reaction in glycolysis. The chain is Fructose-bisphosphate aldolase, plasmid (cbbAP) from Cupriavidus necator (strain ATCC 17699 / DSM 428 / KCTC 22496 / NCIMB 10442 / H16 / Stanier 337) (Ralstonia eutropha).